We begin with the raw amino-acid sequence, 297 residues long: Ribosomal protein L11 methyltransferase (297 aa).

S-adenosyl-L-methionine is bound by residues threonine 152, glycine 173, aspartate 195, and asparagine 234.

This sequence belongs to the methyltransferase superfamily. PrmA family.

Its subcellular location is the cytoplasm. The enzyme catalyses L-lysyl-[protein] + 3 S-adenosyl-L-methionine = N(6),N(6),N(6)-trimethyl-L-lysyl-[protein] + 3 S-adenosyl-L-homocysteine + 3 H(+). In terms of biological role, methylates ribosomal protein L11. This is Ribosomal protein L11 methyltransferase from Cupriavidus taiwanensis (strain DSM 17343 / BCRC 17206 / CCUG 44338 / CIP 107171 / LMG 19424 / R1) (Ralstonia taiwanensis (strain LMG 19424)).